Reading from the N-terminus, the 151-residue chain is UPF0178 protein PFL_5989 (151 aa).

This sequence belongs to the UPF0178 family.

This chain is UPF0178 protein PFL_5989, found in Pseudomonas fluorescens (strain ATCC BAA-477 / NRRL B-23932 / Pf-5).